Reading from the N-terminus, the 318-residue chain is Ubiquinol oxidase (318 aa).

Residues valine 150–leucine 170 traverse the membrane as a helical segment. 3 residues coordinate Fe cation: glutamate 154, glutamate 193, and histidine 196. A helical transmembrane segment spans residues methionine 212–alanine 232. The Fe cation site is built by glutamate 244, glutamate 295, and histidine 298.

Belongs to the alternative oxidase family. In terms of assembly, found as monomers and homodimers. Fe cation serves as cofactor.

Its subcellular location is the mitosome membrane. It carries out the reaction 2 a ubiquinol + O2 = 2 a ubiquinone + 2 H2O. Functionally, alternative oxidase which function may be to reoxidize reducing equivalents produced by glycolysis such as ubiquinol. The sequence is that of Ubiquinol oxidase (AOX) from Trachipleistophora hominis (Microsporidian parasite).